Here is a 172-residue protein sequence, read N- to C-terminus: L-2,4-diaminobutyric acid acetyltransferase (172 aa).

Positions 15 to 166 (IVFDKPTVED…DEHEEELTFR (152 aa)) constitute an N-acetyltransferase domain.

It belongs to the acetyltransferase family. EctA subfamily.

The enzyme catalyses L-2,4-diaminobutanoate + acetyl-CoA = (2S)-4-acetamido-2-aminobutanoate + CoA + H(+). It functions in the pathway amine and polyamine biosynthesis; ectoine biosynthesis; L-ectoine from L-aspartate 4-semialdehyde: step 2/3. Functionally, catalyzes the acetylation of L-2,4-diaminobutyrate (DABA) to gamma-N-acetyl-alpha,gamma-diaminobutyric acid (ADABA) with acetyl coenzyme A. The polypeptide is L-2,4-diaminobutyric acid acetyltransferase (ectA) (Marinococcus halophilus).